Here is a 397-residue protein sequence, read N- to C-terminus: Aspartate/prephenate aminotransferase (397 aa).

L-aspartate contacts are provided by G38, W124, and N174. At K238 the chain carries N6-(pyridoxal phosphate)lysine. Residue R375 coordinates L-aspartate.

The protein belongs to the class-I pyridoxal-phosphate-dependent aminotransferase family. In terms of assembly, homodimer. Pyridoxal 5'-phosphate serves as cofactor.

Its subcellular location is the cytoplasm. The catalysed reaction is L-aspartate + 2-oxoglutarate = oxaloacetate + L-glutamate. The enzyme catalyses L-arogenate + 2-oxoglutarate = prephenate + L-glutamate. Its function is as follows. Catalyzes the reversible conversion of aspartate and 2-oxoglutarate to glutamate and oxaloacetate. Can also transaminate prephenate in the presence of glutamate, with lower efficiency. The polypeptide is Aspartate/prephenate aminotransferase (Nitrosomonas europaea (strain ATCC 19718 / CIP 103999 / KCTC 2705 / NBRC 14298)).